The chain runs to 464 residues: MLATDSDPIVAIATAAGRGGIGVVRVSFGRGGEAAALPLIDALCGQKLAPRHASYVPFLDAHGAPLDRGIALYFPAPHSYTGEHVLELQGHGGPIVMQLLLQRCLDAGRGFGLRLAEPGEFTRRAFLNDKLDLAQAEAVADLIEASTEAAARSAGRSLDGAFSRQIHALVDDVITLRMLVEATLDFPEEEIDFLEAADARGKLAKIRAQLAHVLGDARQGALLREGLSVVLAGQPNVGKSSLLNALAGAELAIVTPIAGTTRDKVAQTIQVEGIPLHIIDTAGLRETEDEVERIGIARTWSEIERADVVLHLLDSRTGMTADDETIAARFPAGVPVVRVLNKTDLTGVPACVEHPAAEGDLTEVHLSAKRGDGIDMLRAELLRIAGWQAGAEGVYLARERHLIALRAAQEHLAQAANHAEQRAQSLDLFAEELRLAQEQLNAITGEFTSDDLLGVIFSRFCIGK.

R25, E87, and K130 together coordinate (6S)-5-formyl-5,6,7,8-tetrahydrofolate. The region spanning 226-386 (GLSVVLAGQP…LRAELLRIAG (161 aa)) is the TrmE-type G domain. N236 is a binding site for K(+). GTP-binding positions include 236 to 241 (NVGKSS), 255 to 261 (TPIAGTT), and 280 to 283 (DTAG). S240 is a binding site for Mg(2+). Positions 255, 257, and 260 each coordinate K(+). T261 lines the Mg(2+) pocket. K464 serves as a coordination point for (6S)-5-formyl-5,6,7,8-tetrahydrofolate.

This sequence belongs to the TRAFAC class TrmE-Era-EngA-EngB-Septin-like GTPase superfamily. TrmE GTPase family. As to quaternary structure, homodimer. Heterotetramer of two MnmE and two MnmG subunits. The cofactor is K(+).

The protein resides in the cytoplasm. Functionally, exhibits a very high intrinsic GTPase hydrolysis rate. Involved in the addition of a carboxymethylaminomethyl (cmnm) group at the wobble position (U34) of certain tRNAs, forming tRNA-cmnm(5)s(2)U34. In Burkholderia orbicola (strain AU 1054), this protein is tRNA modification GTPase MnmE.